The following is a 360-amino-acid chain: Epoxide hydrolase 3 (360 aa).

A helical transmembrane segment spans residues 22–42 (AFMWSLVFSVALVAAAVYGCI). D173 (nucleophile) is an active-site residue. Y281 functions as the Proton donor in the catalytic mechanism. Catalysis depends on H337, which acts as the Proton acceptor.

It belongs to the AB hydrolase superfamily. Epoxide hydrolase family.

The protein localises to the microsome membrane. It catalyses the reaction an epoxide + H2O = an ethanediol. The enzyme catalyses 9,10-epoxyoctadecanoate + H2O = 9,10-dihydroxyoctadecanoate. It carries out the reaction 9,10-epoxy-(12Z)-octadecenoate + H2O = 9,10-dihydroxy-(12Z)-octadecenoate. The catalysed reaction is 8,9-epoxy-(5Z,11Z,14Z)-eicosatrienoate + H2O = 8,9-dihydroxy-(5Z,11Z,14Z)-eicosatrienoate. It catalyses the reaction 11,12-epoxy-(5Z,8Z,14Z)-eicosatrienoate + H2O = 11,12-dihydroxy-(5Z,8Z,14Z)-eicosatrienoate. The enzyme catalyses 14,15-epoxy-(5Z,8Z,11Z)-eicosatrienoate + H2O = 14,15-dihydroxy-(5Z,8Z,11Z)-eicosatrienoate. With respect to regulation, inhibited by 1-(1-acetylpiperidin-4-yl)-3-(4-(trifl uoromethoxy)phenyl)urea (TPAU), 1-cyclohexyl-3-dodecylurea (CDU), 12-(3-adamantan-1-yl-ureido)-dodecanoic acid (AUDA), 1-((3S, 5S, 7S)-adamantan-1-yl)-3-(5-(2-(2-ethoxyethoxy) ethoxy)pentyl)urea (AEPU) and to a lesser extent by 8-(3-((3S, 5S, 7S)-adamantan-1-yl)ureido) octanoic acid (AUOA). In terms of biological role, catalyzes the hydrolysis of epoxide-containing fatty acids. Active in vitro against epoxyeicosatrienoic acids (EETs) including 8,9-EET, 9,10-EET, 11,12-EET and 14,15-EET and leukotoxin. This chain is Epoxide hydrolase 3 (EPHX3), found in Homo sapiens (Human).